A 114-amino-acid chain; its full sequence is T cell receptor beta variable 5-5 (114 aa).

Residues 1-21 (MGPGLLCWVLLCLLGAGPVDA) form the signal peptide. The 93-residue stretch at 22-114 (GVTQSPTHLI…SALYLCASSL (93 aa)) folds into the Ig-like domain. The cysteines at positions 42 and 110 are disulfide-linked. Asparagine 90 carries N-linked (GlcNAc...) asparagine glycosylation.

Alpha-beta TR is a heterodimer composed of an alpha and beta chain; disulfide-linked. The alpha-beta TR is associated with the transmembrane signaling CD3 coreceptor proteins to form the TR-CD3 (TcR or TCR). The assembly of alpha-beta TR heterodimers with CD3 occurs in the endoplasmic reticulum where a single alpha-beta TR heterodimer associates with one CD3D-CD3E heterodimer, one CD3G-CD3E heterodimer and one CD247 homodimer forming a stable octameric structure. CD3D-CD3E and CD3G-CD3E heterodimers preferentially associate with TR alpha and TR beta chains, respectively. The association of the CD247 homodimer is the last step of TcR assembly in the endoplasmic reticulum and is required for transport to the cell surface.

The protein resides in the cell membrane. Its function is as follows. V region of the variable domain of T cell receptor (TR) beta chain that participates in the antigen recognition. Alpha-beta T cell receptors are antigen specific receptors which are essential to the immune response and are present on the cell surface of T lymphocytes. Recognize peptide-major histocompatibility (MH) (pMH) complexes that are displayed by antigen presenting cells (APC), a prerequisite for efficient T cell adaptive immunity against pathogens. Binding of alpha-beta TR to pMH complex initiates TR-CD3 clustering on the cell surface and intracellular activation of LCK that phosphorylates the ITAM motifs of CD3G, CD3D, CD3E and CD247 enabling the recruitment of ZAP70. In turn ZAP70 phosphorylates LAT, which recruits numerous signaling molecules to form the LAT signalosome. The LAT signalosome propagates signal branching to three major signaling pathways, the calcium, the mitogen-activated protein kinase (MAPK) kinase and the nuclear factor NF-kappa-B (NF-kB) pathways, leading to the mobilization of transcription factors that are critical for gene expression and essential for T cell growth and differentiation. The T cell repertoire is generated in the thymus, by V-(D)-J rearrangement. This repertoire is then shaped by intrathymic selection events to generate a peripheral T cell pool of self-MH restricted, non-autoaggressive T cells. Post-thymic interaction of alpha-beta TR with the pMH complexes shapes TR structural and functional avidity. The sequence is that of T cell receptor beta variable 5-5 from Homo sapiens (Human).